Reading from the N-terminus, the 603-residue chain is F-box only protein 46 (603 aa).

Residues 20–63 (YSQNQPRPPSAALKPSACPEPGGGAEPDHGPAHSENTPPALATE) form a disordered region. Residues Ser21 and Ser67 each carry the phosphoserine; by ATM modification. Disordered stretches follow at residues 111-163 (GGSR…PASA), 235-301 (EAQR…ARAK), 326-360 (LLARADEASEGDSPAPARPEDTPPAPPPPPARDCG), and 396-440 (TVSP…AEGT). Positions 152-163 (GPPAAEEGPASA) are enriched in low complexity. At Ser338 the chain carries Phosphoserine. A Phosphothreonine modification is found at Thr347. 2 stretches are compositionally biased toward pro residues: residues 347-356 (TPPAPPPPPA) and 417-426 (DGPPEPPPAD). One can recognise an F-box domain in the interval 470–522 (RQYMLLLPEHVLVKIFSFLPTRALAALKCTCHHFKGIIEAFGVRATDSRWSRD).

As to quaternary structure, part of a SCF (SKP1-cullin-F-box) protein ligase complex SCF(FBXO46) composed of CUL1, SKP1, RBX1 and FBXO46. In terms of processing, phosphorylated by ATM in response to DNA damage, promoting ubiquitination and degradation by the SCF(FBXO31) complex. Post-translationally, ATM-phosphorylated FBXO46 is ubiquitinated and degradaded by the SCF(FBXO31) complex in response to DNA damage.

It participates in protein modification; protein ubiquitination. Substrate-recognition component of the SCF(FBXO46) protein ligase complex, which mediates the ubiquitination and degradation of target proteins. In absence of stress, the SCF(FBXO46) complex catalyzes ubiquitination and degradation of MTOR-phosphorylated FBXO31. The protein is F-box only protein 46 of Homo sapiens (Human).